A 168-amino-acid polypeptide reads, in one-letter code: uncharacterized protein (168 aa).

The protein localises to the mitochondrion. This is an uncharacterized protein from Marchantia polymorpha (Common liverwort).